We begin with the raw amino-acid sequence, 127 residues long: Small ribosomal subunit protein eS6 (127 aa).

Belongs to the eukaryotic ribosomal protein eS6 family.

The sequence is that of Small ribosomal subunit protein eS6 from Picrophilus torridus (strain ATCC 700027 / DSM 9790 / JCM 10055 / NBRC 100828 / KAW 2/3).